A 388-amino-acid polypeptide reads, in one-letter code: 1-deoxy-D-xylulose 5-phosphate reductoisomerase (388 aa).

Thr10, Gly11, Ser12, Ile13, Lys37, Asn38, and Asn123 together coordinate NADPH. 1-deoxy-D-xylulose 5-phosphate is bound at residue Lys124. NADPH is bound at residue Glu125. A Mn(2+)-binding site is contributed by Asp149. 4 residues coordinate 1-deoxy-D-xylulose 5-phosphate: Ser150, Glu151, Ser175, and His198. Mn(2+) is bound at residue Glu151. NADPH is bound at residue Gly204. The 1-deoxy-D-xylulose 5-phosphate site is built by Ser211, Asn216, Lys217, and Glu220. A Mn(2+)-binding site is contributed by Glu220.

The protein belongs to the DXR family. Mg(2+) serves as cofactor. Requires Mn(2+) as cofactor.

The catalysed reaction is 2-C-methyl-D-erythritol 4-phosphate + NADP(+) = 1-deoxy-D-xylulose 5-phosphate + NADPH + H(+). Its pathway is isoprenoid biosynthesis; isopentenyl diphosphate biosynthesis via DXP pathway; isopentenyl diphosphate from 1-deoxy-D-xylulose 5-phosphate: step 1/6. Catalyzes the NADPH-dependent rearrangement and reduction of 1-deoxy-D-xylulose-5-phosphate (DXP) to 2-C-methyl-D-erythritol 4-phosphate (MEP). In Pelagibacter ubique (strain HTCC1062), this protein is 1-deoxy-D-xylulose 5-phosphate reductoisomerase.